The chain runs to 451 residues: Aminodeoxychorismate synthase component 1 (451 aa).

L-tryptophan is bound by residues S34, 41-44 (HNRF), and 238-240 (PFS). The active-site Proton donor is E256. K272 acts as the N6-(4-deoxychorismate)-lysine intermediate in catalysis.

Belongs to the anthranilate synthase component I family. In terms of assembly, monomer. Heterodimer consisting of two non-identical subunits: a glutamine amidotransferase subunit (PabA) and a aminodeoxychorismate synthase subunit (PabB). Mg(2+) is required as a cofactor.

The enzyme catalyses chorismate + L-glutamine = 4-amino-4-deoxychorismate + L-glutamate. It participates in cofactor biosynthesis; tetrahydrofolate biosynthesis; 4-aminobenzoate from chorismate: step 1/2. Part of a heterodimeric complex that catalyzes the two-step biosynthesis of 4-amino-4-deoxychorismate (ADC), a precursor of p-aminobenzoate (PABA) and tetrahydrofolate. In the first step, a glutamine amidotransferase (PabA) generates ammonia as a substrate that, along with chorismate, is used in the second step, catalyzed by aminodeoxychorismate synthase (PabB) to produce ADC. This Klebsiella aerogenes (Enterobacter aerogenes) protein is Aminodeoxychorismate synthase component 1 (pabB).